The following is a 691-amino-acid chain: Elongation factor G (691 aa).

In terms of domain architecture, tr-type G spans 8 to 282 (EKTRNIGIMA…AVVDYLPSPV (275 aa)). GTP contacts are provided by residues 17 to 24 (AHIDAGKT), 81 to 85 (DTPGH), and 135 to 138 (NKMD).

This sequence belongs to the TRAFAC class translation factor GTPase superfamily. Classic translation factor GTPase family. EF-G/EF-2 subfamily.

It localises to the cytoplasm. Functionally, catalyzes the GTP-dependent ribosomal translocation step during translation elongation. During this step, the ribosome changes from the pre-translocational (PRE) to the post-translocational (POST) state as the newly formed A-site-bound peptidyl-tRNA and P-site-bound deacylated tRNA move to the P and E sites, respectively. Catalyzes the coordinated movement of the two tRNA molecules, the mRNA and conformational changes in the ribosome. The protein is Elongation factor G of Caldicellulosiruptor bescii (strain ATCC BAA-1888 / DSM 6725 / KCTC 15123 / Z-1320) (Anaerocellum thermophilum).